A 396-amino-acid chain; its full sequence is 1-deoxy-D-xylulose 5-phosphate reductoisomerase (396 aa).

NADPH-binding residues include Thr13, Gly14, Ser15, Ile16, and Asn127. Lys128 is a binding site for 1-deoxy-D-xylulose 5-phosphate. Residue Glu129 participates in NADPH binding. Asp153 is a binding site for Mn(2+). 4 residues coordinate 1-deoxy-D-xylulose 5-phosphate: Ser154, Glu155, Ser184, and His207. Glu155 is a binding site for Mn(2+). Residue Gly213 participates in NADPH binding. Residues Ser220, Asn225, Lys226, and Glu229 each coordinate 1-deoxy-D-xylulose 5-phosphate. Mn(2+) is bound at residue Glu229.

This sequence belongs to the DXR family. The cofactor is Mg(2+). Mn(2+) serves as cofactor.

It catalyses the reaction 2-C-methyl-D-erythritol 4-phosphate + NADP(+) = 1-deoxy-D-xylulose 5-phosphate + NADPH + H(+). It participates in isoprenoid biosynthesis; isopentenyl diphosphate biosynthesis via DXP pathway; isopentenyl diphosphate from 1-deoxy-D-xylulose 5-phosphate: step 1/6. Inhibited by fosmidomycin and 3-(N-acetyl-N-hydroxyamino)-propylphosphonic acid (FR-900098). Its function is as follows. Catalyzes the NADPH-dependent rearrangement and reduction of 1-deoxy-D-xylulose-5-phosphate (DXP) to 2-C-methyl-D-erythritol 4-phosphate (MEP). In Pseudomonas aeruginosa (strain ATCC 15692 / DSM 22644 / CIP 104116 / JCM 14847 / LMG 12228 / 1C / PRS 101 / PAO1), this protein is 1-deoxy-D-xylulose 5-phosphate reductoisomerase.